We begin with the raw amino-acid sequence, 340 residues long: Fructose import permease protein FruG (340 aa).

9 consecutive transmembrane segments (helical) span residues isoleucine 23 to phenylalanine 43, leucine 49 to methionine 69, isoleucine 73 to glycine 93, valine 101 to alanine 121, methionine 130 to isoleucine 150, leucine 182 to leucine 202, isoleucine 234 to isoleucine 254, valine 273 to glycine 293, and phenylalanine 307 to valine 327.

Belongs to the binding-protein-dependent transport system permease family. The complex is composed of an ATP-binding protein (FruK), two transmembrane proteins (FruF and FruG) and a solute-binding protein (FruE).

Its subcellular location is the cell membrane. In terms of biological role, part of the high-affinity ABC transporter complex FruEKFG involved in fructose uptake. Can also transport ribose and xylose, with lower affinity. Probably responsible for the translocation of the substrate across the membrane. This is Fructose import permease protein FruG from Bifidobacterium longum (strain NCC 2705).